A 640-amino-acid chain; its full sequence is Threonine--tRNA ligase (640 aa).

The TGS domain maps to M1–T60. A catalytic region spans residues D241–P538. The Zn(2+) site is built by C334, H385, and H515.

This sequence belongs to the class-II aminoacyl-tRNA synthetase family. In terms of assembly, homodimer. Requires Zn(2+) as cofactor.

It is found in the cytoplasm. It carries out the reaction tRNA(Thr) + L-threonine + ATP = L-threonyl-tRNA(Thr) + AMP + diphosphate + H(+). Catalyzes the attachment of threonine to tRNA(Thr) in a two-step reaction: L-threonine is first activated by ATP to form Thr-AMP and then transferred to the acceptor end of tRNA(Thr). Also edits incorrectly charged L-seryl-tRNA(Thr). The sequence is that of Threonine--tRNA ligase from Listeria welshimeri serovar 6b (strain ATCC 35897 / DSM 20650 / CCUG 15529 / CIP 8149 / NCTC 11857 / SLCC 5334 / V8).